The following is a 154-amino-acid chain: Large ribosomal subunit protein uL15 (154 aa).

Residues 1–54 (MKLHDLTPAPGSRKPKKRVGRGPGGTDKTAGRGHKGQKSRSGAGKGPFFEGGRS) are disordered.

The protein belongs to the universal ribosomal protein uL15 family. In terms of assembly, part of the 50S ribosomal subunit.

Its function is as follows. Binds to the 23S rRNA. The chain is Large ribosomal subunit protein uL15 from Deinococcus geothermalis (strain DSM 11300 / CIP 105573 / AG-3a).